The chain runs to 434 residues: Protein maelstrom homolog (434 aa).

The segment at residues 4-73 (RRGSRNAYYF…AQGKDAGPWE (70 aa)) is a DNA-binding region (HMG box). The segment at 357-387 (SHFSSSNQEQRSNTPTGDYPSGVKISGQSSS) is disordered. Residues 363–372 (NQEQRSNTPT) are compositionally biased toward polar residues.

It belongs to the maelstrom family. In terms of assembly, interacts with SMARCB1, SIN3B and DDX4. Interacts with piRNA-associated proteins TDRD1, PIWIL1 and PIWIL2. Interacts with TEX19.

It is found in the cytoplasm. The protein resides in the nucleus. Its function is as follows. Plays a central role during spermatogenesis by repressing transposable elements and preventing their mobilization, which is essential for the germline integrity. Acts via the piRNA metabolic process, which mediates the repression of transposable elements during meiosis by forming complexes composed of piRNAs and Piwi proteins and governs the methylation and subsequent repression of transposons. Its association with piP-bodies suggests a participation in the secondary piRNAs metabolic process. Required for the localization of germ-cell factors to the meiotic nuage. This Sus scrofa (Pig) protein is Protein maelstrom homolog (MAEL).